Reading from the N-terminus, the 160-residue chain is 3-hydroxyacyl-[acyl-carrier-protein] dehydratase FabZ (160 aa).

His-59 is an active-site residue.

The protein belongs to the thioester dehydratase family. FabZ subfamily.

The protein resides in the cytoplasm. The enzyme catalyses a (3R)-hydroxyacyl-[ACP] = a (2E)-enoyl-[ACP] + H2O. In terms of biological role, involved in unsaturated fatty acids biosynthesis. Catalyzes the dehydration of short chain beta-hydroxyacyl-ACPs and long chain saturated and unsaturated beta-hydroxyacyl-ACPs. This Burkholderia thailandensis (strain ATCC 700388 / DSM 13276 / CCUG 48851 / CIP 106301 / E264) protein is 3-hydroxyacyl-[acyl-carrier-protein] dehydratase FabZ.